The sequence spans 322 residues: 4-diphosphocytidyl-2-C-methyl-D-erythritol kinase (322 aa).

Residue Lys18 is part of the active site. 130–140 serves as a coordination point for ATP; that stretch reads PMGAGLGGGSS. Residue Asp172 is part of the active site.

It belongs to the GHMP kinase family. IspE subfamily.

The enzyme catalyses 4-CDP-2-C-methyl-D-erythritol + ATP = 4-CDP-2-C-methyl-D-erythritol 2-phosphate + ADP + H(+). It functions in the pathway isoprenoid biosynthesis; isopentenyl diphosphate biosynthesis via DXP pathway; isopentenyl diphosphate from 1-deoxy-D-xylulose 5-phosphate: step 3/6. Catalyzes the phosphorylation of the position 2 hydroxy group of 4-diphosphocytidyl-2C-methyl-D-erythritol. In Psychrobacter cryohalolentis (strain ATCC BAA-1226 / DSM 17306 / VKM B-2378 / K5), this protein is 4-diphosphocytidyl-2-C-methyl-D-erythritol kinase.